Consider the following 525-residue polypeptide: Histidine-rich glycoprotein (525 aa).

The first 18 residues, 1–18 (MKALIAALLLITLQYSCA), serve as a signal peptide directing secretion. Cystatin domains lie at 19–136 (VSPT…SALA) and 137–254 (NTKD…NING). 5 cysteine pairs are disulfide-bonded: cysteine 24/cysteine 504, cysteine 78/cysteine 89, cysteine 105/cysteine 126, cysteine 203/cysteine 417, and cysteine 218/cysteine 241. Positions 41–84 (RRRDGYLFQLLRIADAHLDRVENTTVYYLVLDVQESDCSVLSRK) are interaction with ATP5F1A. Asparagine 63 carries an N-linked (GlcNAc...) asparagine glycan. The N-linked (GlcNAc...) asparagine glycan is linked to asparagine 125. The tract at residues 252–407 (INGVPPHLGH…GHHPHGHHPH (156 aa)) is disordered. Basic residues predominate over residues 284–293 (RDHHHPHKPH). The span at 310–320 (PPLPQGPPPLL) shows a compositional bias: pro residues. The segment covering 323–348 (SCSSCQHATFGTNGAQRHSHNNNSSD) has biased composition (polar residues). 2 N-linked (GlcNAc...) asparagine glycosylation sites follow: asparagine 344 and asparagine 345. The interval 348–382 (DLHPHKHHSHEQHPHGHHPHAHHPHEHDTHRQHPH) is necessary for endothelial cell focal adhesions and anti-angiogenic activities. 2 stretches are compositionally biased toward basic residues: residues 351 to 371 (PHKH…AHHP) and 379 to 407 (QHPH…HHPH).

As to quaternary structure, interacts (via the HRR domain) with TPM1; the interaction appears to contribute to the antiangiogenic properties of the HRR domain. Interacts with THBS2; the interaction blocks the antiangiogenic effect of THBS2 with CD36. Interacts with THBS1 (via the TSP type I repeats); the interaction blocks the antiangiogenic effect of THBS1 with CD3. Interacts with PLG (via its Kringle domains); the interaction tethers PLG to the cell surface and enhances its activation. Interacts with HPSE; the interaction is enhanced at acidic pH, partially inhibits binding of HPSE to cell surface receptors and modulates its enzymatic activity. Interacts (via the HRR domain) with TMP1; the interaction partially mediates the antiangiogenic properties of HRG. Interacts with kappa and lambda light chains of IgG molecules. Interacts with ATP5F1A; the interaction occurs on the surface of T-cells and alters their cell morphology in concert with CONA. Binds IgG molecules containing kappa and lambda light chains and inhibits the formation of insoluble immunoglobulin complexes. Interacts with F12; the interaction, which is enhanced in the presence of zinc ions and inhibited by heparin-binding to HRG, inhibits factor XII autoactivation and contact-initiated coagulation. Requires Zn(2+) as cofactor. Post-translationally, proteolytic cleavage produces several HRG fragments which are mostly disulfide-linked and, therefore, not released. Cleavage by plasmin is inhibited in the presence of heparin, zinc ions or in an acidic environment. Cleavage reduces binding of HRG to heparan sulfate, but enhances the ability of HRG to bind and tether plasminogen to the cell surface. On platelet activation, releases a 33 kDa antiangiogenic peptide which encompasses the HRR. Also cleaved in the C-terminal by plasmin. N-glycosylated. Expressed in macrophages and in malignant cells. Expressed by the liver and secreted in plasma (at protein level).

It is found in the secreted. Its function is as follows. Plasma glycoprotein that binds a number of ligands such as heme, heparin, heparan sulfate, thrombospondin, plasminogen, and divalent metal ions. Binds heparin and heparin/glycosaminoglycans in a zinc-dependent manner. Binds heparan sulfate on the surface of liver, lung, kidney and heart endothelial cells. Binds to N-sulfated polysaccharide chains on the surface of liver endothelial cells. Inhibits rosette formation. Acts as an adapter protein and is implicated in regulating many processes such as immune complex and pathogen clearance, cell chemotaxis, cell adhesion, angiogenesis, coagulation and fibrinolysis. Mediates clearance of necrotic cells through enhancing the phagocytosis of necrotic cells in a heparan sulfate-dependent pathway. This process can be regulated by the presence of certain HRG ligands such as heparin and zinc ions. Binds to IgG subclasses of immunoglobins containing kappa and lambda light chains with different affinities regulating their clearance and inhibiting the formation of insoluble immune complexes. Tethers plasminogen to the cell surface. Binds T-cells and alters the cell morphology. Modulates angiogenesis by blocking the CD6-mediated antiangiongenic effect of thrombospondins, THBS1 and THBS2. Acts as a regulator of the vascular endothelial growth factor (VEGF) signaling pathway; inhibits endothelial cell motility by reducing VEGF-induced complex formation between PXN/paxillin and ILK/integrin-linked protein kinase and by promoting inhibition of VEGF-induced tyrosine phosphorylation of focal adhesion kinases and alpha-actinins in endothelial cells. Also plays a role in the regulation of tumor angiogenesis and tumor immune surveillance. Normalizes tumor vessels and promotes antitumor immunity by polarizing tumor-associated macrophages, leading to decreased tumor growth and metastasis. The polypeptide is Histidine-rich glycoprotein (HRG) (Homo sapiens (Human)).